The chain runs to 250 residues: DNA repair protein RecO (250 aa).

This sequence belongs to the RecO family.

In terms of biological role, involved in DNA repair and RecF pathway recombination. The polypeptide is DNA repair protein RecO (Rhodopseudomonas palustris (strain TIE-1)).